The chain runs to 505 residues: Histidine ammonia-lyase (505 aa).

Positions 141-143 form a cross-link, 5-imidazolinone (Ala-Gly); that stretch reads ASG. The residue at position 142 (serine 142) is a 2,3-didehydroalanine (Ser).

It belongs to the PAL/histidase family. Post-translationally, contains an active site 4-methylidene-imidazol-5-one (MIO), which is formed autocatalytically by cyclization and dehydration of residues Ala-Ser-Gly.

It is found in the cytoplasm. The enzyme catalyses L-histidine = trans-urocanate + NH4(+). It functions in the pathway amino-acid degradation; L-histidine degradation into L-glutamate; N-formimidoyl-L-glutamate from L-histidine: step 1/3. The sequence is that of Histidine ammonia-lyase from Bacillus cytotoxicus (strain DSM 22905 / CIP 110041 / 391-98 / NVH 391-98).